We begin with the raw amino-acid sequence, 253 residues long: Large ribosomal subunit protein uL2C (253 aa).

It belongs to the universal ribosomal protein uL2 family. Component of the large ribosomal subunit (LSU). Mature yeast ribosomes consist of a small (40S) and a large (60S) subunit. The 40S small subunit contains 1 molecule of ribosomal RNA (18S rRNA) and at least 33 different proteins. The large 60S subunit contains 3 rRNA molecules (25S, 5.8S and 5S rRNA) and at least 46 different proteins.

It is found in the cytoplasm. The protein resides in the nucleus. In terms of biological role, component of the ribosome, a large ribonucleoprotein complex responsible for the synthesis of proteins in the cell. The small ribosomal subunit (SSU) binds messenger RNAs (mRNAs) and translates the encoded message by selecting cognate aminoacyl-transfer RNA (tRNA) molecules. The large subunit (LSU) contains the ribosomal catalytic site termed the peptidyl transferase center (PTC), which catalyzes the formation of peptide bonds, thereby polymerizing the amino acids delivered by tRNAs into a polypeptide chain. The nascent polypeptides leave the ribosome through a tunnel in the LSU and interact with protein factors that function in enzymatic processing, targeting, and the membrane insertion of nascent chains at the exit of the ribosomal tunnel. The chain is Large ribosomal subunit protein uL2C (rpl803) from Schizosaccharomyces pombe (strain 972 / ATCC 24843) (Fission yeast).